The following is a 271-amino-acid chain: Nuclear egress protein 2 (271 aa).

Topologically, residues 1–249 are perinuclear space; sequence MSVVGKRVVD…LGRAVALVRR (249 aa). The chain crosses the membrane as a helical span at residues 250 to 267; that stretch reads SWPWISAGIAFLCLGLVW. Topologically, residues 268-271 are nuclear; it reads MRPS.

This sequence belongs to the herpesviridae NEC2 protein family. As to quaternary structure, forms a heterohexameric complex with NEC1. Phosphorylated.

The protein localises to the host nucleus inner membrane. Plays an essential role in virion nuclear egress, the first step of virion release from infected cell. Within the host nucleus, NEC1 interacts with the newly formed capsid through the vertexes and directs it to the inner nuclear membrane by associating with NEC2. Induces the budding of the capsid at the inner nuclear membrane as well as its envelopment into the perinuclear space. There, the NEC1/NEC2 complex promotes the fusion of the enveloped capsid with the outer nuclear membrane and the subsequent release of the viral capsid into the cytoplasm where it will reach the secondary budding sites in the host Golgi or trans-Golgi network. The sequence is that of Nuclear egress protein 2 from Homo sapiens (Human).